A 273-amino-acid polypeptide reads, in one-letter code: Glutamate 5-kinase (273 aa).

An ATP-binding site is contributed by Lys-15. Ser-55, Asp-142, and Asn-158 together coordinate substrate. Residues 178-179 (SD) and 220-226 (TGGMLSK) each bind ATP.

It belongs to the glutamate 5-kinase family.

It localises to the cytoplasm. It catalyses the reaction L-glutamate + ATP = L-glutamyl 5-phosphate + ADP. It functions in the pathway amino-acid biosynthesis; L-proline biosynthesis; L-glutamate 5-semialdehyde from L-glutamate: step 1/2. Functionally, catalyzes the transfer of a phosphate group to glutamate to form L-glutamate 5-phosphate. This chain is Glutamate 5-kinase, found in Streptococcus pyogenes serotype M18 (strain MGAS8232).